A 118-amino-acid chain; its full sequence is Large ribosomal subunit protein bL20 (118 aa).

It belongs to the bacterial ribosomal protein bL20 family.

Functionally, binds directly to 23S ribosomal RNA and is necessary for the in vitro assembly process of the 50S ribosomal subunit. It is not involved in the protein synthesizing functions of that subunit. The protein is Large ribosomal subunit protein bL20 of Gluconobacter oxydans (strain 621H) (Gluconobacter suboxydans).